Here is a 426-residue protein sequence, read N- to C-terminus: Histidine--tRNA ligase (426 aa).

The protein belongs to the class-II aminoacyl-tRNA synthetase family. Homodimer.

It localises to the cytoplasm. It catalyses the reaction tRNA(His) + L-histidine + ATP = L-histidyl-tRNA(His) + AMP + diphosphate + H(+). In Shewanella baltica (strain OS223), this protein is Histidine--tRNA ligase.